Reading from the N-terminus, the 89-residue chain is Small ribosomal subunit protein uS15 (89 aa).

The protein belongs to the universal ribosomal protein uS15 family. In terms of assembly, part of the 30S ribosomal subunit. Forms a bridge to the 50S subunit in the 70S ribosome, contacting the 23S rRNA.

Its function is as follows. One of the primary rRNA binding proteins, it binds directly to 16S rRNA where it helps nucleate assembly of the platform of the 30S subunit by binding and bridging several RNA helices of the 16S rRNA. Functionally, forms an intersubunit bridge (bridge B4) with the 23S rRNA of the 50S subunit in the ribosome. The protein is Small ribosomal subunit protein uS15 of Vibrio atlanticus (strain LGP32) (Vibrio splendidus (strain Mel32)).